The chain runs to 218 residues: MPAKLGYWKIRGLQQPVRLLLEYLGEEYEEHLYGRDDREKWFGDKFNMGLDLPNLPYYIDDKCKLTQSVAIMRYIADKHGMLGTTPEERARISMIEGAAMDLRMGFVRVCYNPKFEEVKGDYLKELPTTLKMWSNFLGDRHYLTGSPVSHVDFMVYEALDCIRYLAPQCLEDFPKLKEFKSRIEDLPKIKAYMESEKFIKWPLNSWIASFGGGDAAPA.

One can recognise a GST N-terminal domain in the interval 2–83 (PAKLGYWKIR…YIADKHGMLG (82 aa)). Residues 7–8 (YW), 41–45 (WFGDK), 54–55 (NL), and 67–68 (QS) contribute to the glutathione site. The 119-residue stretch at 85-203 (TPEERARISM…ESEKFIKWPL (119 aa)) folds into the GST C-terminal domain. Tyr-111 serves as a coordination point for substrate.

The protein belongs to the GST superfamily. Mu family. As to quaternary structure, homodimer.

It localises to the cytoplasm. The catalysed reaction is RX + glutathione = an S-substituted glutathione + a halide anion + H(+). In terms of biological role, conjugation of reduced glutathione to a wide number of exogenous and endogenous hydrophobic electrophiles. Its function is as follows. GST isoenzymes appear to play a central role in the parasite detoxification system. Other functions are also suspected including a role in increasing the solubility of haematin in the parasite gut. The protein is Glutathione S-transferase class-mu 26 kDa isozyme 51 of Fasciola hepatica (Liver fluke).